The primary structure comprises 358 residues: HTH-type transcriptional regulator IpsA (358 aa).

In terms of domain architecture, HTH lacI-type spans 8–63 (GTLASIAAKLGISRTTVSNAYNRPEQLSAELRQRILDTAEDMGYLGPDPVARSLRT). Positions 10–29 (LASIAAKLGISRTTVSNAYN) form a DNA-binding region, H-T-H motif.

Homodimer.

Its activity is regulated as follows. Myo-inositol causes the dissociation of the IpsA-DNA complex in vitro. Its function is as follows. Plays a role in the regulation of cell wall biogenesis. Inositol-dependent transcriptional activator of ino1, which encodes inositol phosphate synthase. Also regulates other target genes, which are most likely involved in the synthesis of inositol-derived cell wall components and mycothiol. Acts by binding to a conserved palindromic motif within the promoter regions. The polypeptide is HTH-type transcriptional regulator IpsA (Corynebacterium glutamicum (strain ATCC 13032 / DSM 20300 / JCM 1318 / BCRC 11384 / CCUG 27702 / LMG 3730 / NBRC 12168 / NCIMB 10025 / NRRL B-2784 / 534)).